Here is a 140-residue protein sequence, read N- to C-terminus: Large ribosomal subunit protein bL17 (140 aa).

The disordered stretch occupies residues 121 to 140 (AAKGLDSGPTAEANDDDSEE).

It belongs to the bacterial ribosomal protein bL17 family. Part of the 50S ribosomal subunit. Contacts protein L32.

The chain is Large ribosomal subunit protein bL17 from Rhodospirillum rubrum (strain ATCC 11170 / ATH 1.1.1 / DSM 467 / LMG 4362 / NCIMB 8255 / S1).